Here is a 122-residue protein sequence, read N- to C-terminus: MICOS complex subunit MIC13 homolog QIL1 (122 aa).

Residues 9-25 (GGLVAATVYYTQKVGIW) form a helical membrane-spanning segment.

The protein belongs to the MICOS complex subunit Mic13 family. Component of the mitochondrial contact site and cristae organizing system (MICOS) complex.

The protein localises to the mitochondrion inner membrane. Its function is as follows. Component of the MICOS complex, a large protein complex of the mitochondrial inner membrane that plays crucial roles in the maintenance of crista junctions, inner membrane architecture, and formation of contact sites to the outer membrane. This is MICOS complex subunit MIC13 homolog QIL1 from Drosophila melanogaster (Fruit fly).